The primary structure comprises 422 residues: Adhesin YadA (422 aa).

The first 25 residues, 1–25 (MTKDFKISVSAALISALFSSPYAFA), serve as a signal peptide directing secretion. The surface exposed passenger domain stretch occupies residues 26-330 (NNDEVHFTAV…KKAIRESNQY (305 aa)). A coiled-coil region spans residues 206–236 (VNVAQLKKEIEKTQVNANKKSAEVLGIANNY). The segment at 331 to 368 (TDHKFRQLDNRLDKLDTRVDKGLASSAALNSLFQPYGV) is outer membrane translocation of the passenger domain. Transmembrane regions (beta stranded) follow at residues 369 to 379 (GKVNFTAGVGG), 383 to 394 (SQALAIGSGYRV), 401 to 407 (KAGVAYA), and 411 to 422 (DVMYNASFNIEW). A translocator domain region spans residues 369–422 (GKVNFTAGVGGYRSSQALAIGSGYRVNESVALKAGVAYAGSSDVMYNASFNIEW).

It belongs to the autotransporter-2 (AT-2) (TC 1.B.40) family. Homotrimer; trimers are very stable, not disrupted by heating at 95 degrees Celsius for 10 minutes in SDS sample buffer.

The protein localises to the cell surface. It is found in the cell outer membrane. Functionally, collagen-binding outer membrane protein forming a fibrillar matrix on the bacterial cell surface and phagocytosis resistance. Promotes initial attachment and invasion of eukaryotic cells. Also protects the bacteria by being responsible for agglutination, serum resistance and complement inactivation. Gly-389 plays an important role in this protein; replacing it with increasingly large polar residues decreases expression levels and trimer stability. Residues larger than Ser (Thr, Asn or His) significantly decrease serume resistance and bacterial autoagglution without affecting adhesion to host cells or host cell cytokine production. The sequence is that of Adhesin YadA from Yersinia enterocolitica serotype O:8 / biotype 1B (strain NCTC 13174 / 8081).